The chain runs to 364 residues: MKEKTLPKYLQLKQEILSWIISGQMKPDEKIPTEHEIANQFQLSRHTVRQALGELEKEGWLYKIQGSGTFVSRPKPKEQVDTKTIGIVTTYISDYIFPHIVRGAEETLREKGYRLLLASTNNDKQREKEQLEEMIREPLSGLIIEPTKSAQGNPNMGYYLSLNNLHIPYVMINARYLEVSCPCVKMDDEQGGFLLTDHLIRLGHRRIAGFFKTDDLQGVDRLRGFIRAHQQHEVPVATEYLLSYATEEKWTKPLEVAREFLQRPKEERPTAFVCYNDELAILLLEVIRQQGLSVPDDISIVGFDDFTFATATEVKLTTIRHPKTEMGVQAAEMLIQMIEQRSVDKIGDIIYRPELIVRNSTKEI.

The HTH gntR-type domain occupies 6-74 (LPKYLQLKQE…QGSGTFVSRP (69 aa)). A DNA-binding region (H-T-H motif) is located at residues 34 to 53 (EHEIANQFQLSRHTVRQALG).

It is found in the cytoplasm. In terms of biological role, transcriptional repressor of the arabinose utilization genes. This is Arabinose metabolism transcriptional repressor (araR) from Geobacillus stearothermophilus (Bacillus stearothermophilus).